Consider the following 191-residue polypeptide: Cytochrome c oxidase assembly protein CtaG (191 aa).

At 1 to 9 (MALNGPQKT) the chain is on the cytoplasmic side. Residues 10-30 (VVQLVSVVVVMGGLAWASVPF) traverse the membrane as a helical; Signal-anchor for type II membrane protein segment. The Periplasmic segment spans residues 31–191 (YDWFCRVTGF…LDAGEKTNTN (161 aa)).

The protein belongs to the COX11/CtaG family.

It localises to the cell inner membrane. Its function is as follows. Exerts its effect at some terminal stage of cytochrome c oxidase synthesis, probably by being involved in the insertion of the copper B into subunit I. This chain is Cytochrome c oxidase assembly protein CtaG, found in Ruegeria pomeroyi (strain ATCC 700808 / DSM 15171 / DSS-3) (Silicibacter pomeroyi).